We begin with the raw amino-acid sequence, 311 residues long: tRNA-cytidine(32) 2-sulfurtransferase (311 aa).

Positions serine 47–serine 52 match the PP-loop motif motif. [4Fe-4S] cluster contacts are provided by cysteine 122, cysteine 125, and cysteine 213.

The protein belongs to the TtcA family. As to quaternary structure, homodimer. It depends on Mg(2+) as a cofactor. The cofactor is [4Fe-4S] cluster.

The protein resides in the cytoplasm. The catalysed reaction is cytidine(32) in tRNA + S-sulfanyl-L-cysteinyl-[cysteine desulfurase] + AH2 + ATP = 2-thiocytidine(32) in tRNA + L-cysteinyl-[cysteine desulfurase] + A + AMP + diphosphate + H(+). It functions in the pathway tRNA modification. Catalyzes the ATP-dependent 2-thiolation of cytidine in position 32 of tRNA, to form 2-thiocytidine (s(2)C32). The sulfur atoms are provided by the cysteine/cysteine desulfurase (IscS) system. The chain is tRNA-cytidine(32) 2-sulfurtransferase from Salmonella typhimurium (strain LT2 / SGSC1412 / ATCC 700720).